We begin with the raw amino-acid sequence, 1420 residues long: DNA-directed RNA polymerase subunit beta' (1420 aa).

Residues Cys-71, Cys-73, Cys-86, and Cys-89 each contribute to the Zn(2+) site. The Mg(2+) site is built by Asp-461, Asp-463, and Asp-465. Cys-815, Cys-889, Cys-896, and Cys-899 together coordinate Zn(2+).

It belongs to the RNA polymerase beta' chain family. In terms of assembly, the RNAP catalytic core consists of 2 alpha, 1 beta, 1 beta' and 1 omega subunit. When a sigma factor is associated with the core the holoenzyme is formed, which can initiate transcription. Mg(2+) is required as a cofactor. The cofactor is Zn(2+).

The catalysed reaction is RNA(n) + a ribonucleoside 5'-triphosphate = RNA(n+1) + diphosphate. Functionally, DNA-dependent RNA polymerase catalyzes the transcription of DNA into RNA using the four ribonucleoside triphosphates as substrates. The protein is DNA-directed RNA polymerase subunit beta' of Histophilus somni (strain 129Pt) (Haemophilus somnus).